The primary structure comprises 454 residues: Bifunctional protein GlmU (454 aa).

The segment at 1-226 (MALNVVILAA…AIEVEGANNR (226 aa)) is pyrophosphorylase. UDP-N-acetyl-alpha-D-glucosamine contacts are provided by residues 8-11 (LAAG), K22, Q73, 78-79 (GT), 100-102 (YGD), G137, E151, N166, and N224. D102 provides a ligand contact to Mg(2+). Residue N224 coordinates Mg(2+). The tract at residues 227-247 (VQLAQLERAYQAREAEKLMIA) is linker. The tract at residues 248–454 (GANLRDPSRI…GWQRPVKIKK (207 aa)) is N-acetyltransferase. UDP-N-acetyl-alpha-D-glucosamine contacts are provided by R330 and K348. H360 functions as the Proton acceptor in the catalytic mechanism. UDP-N-acetyl-alpha-D-glucosamine is bound by residues Y363 and N374. Acetyl-CoA-binding positions include A377, 383 to 384 (NY), S402, A420, and R437.

In the N-terminal section; belongs to the N-acetylglucosamine-1-phosphate uridyltransferase family. The protein in the C-terminal section; belongs to the transferase hexapeptide repeat family. In terms of assembly, homotrimer. It depends on Mg(2+) as a cofactor.

Its subcellular location is the cytoplasm. It catalyses the reaction alpha-D-glucosamine 1-phosphate + acetyl-CoA = N-acetyl-alpha-D-glucosamine 1-phosphate + CoA + H(+). It carries out the reaction N-acetyl-alpha-D-glucosamine 1-phosphate + UTP + H(+) = UDP-N-acetyl-alpha-D-glucosamine + diphosphate. The protein operates within nucleotide-sugar biosynthesis; UDP-N-acetyl-alpha-D-glucosamine biosynthesis; N-acetyl-alpha-D-glucosamine 1-phosphate from alpha-D-glucosamine 6-phosphate (route II): step 2/2. It functions in the pathway nucleotide-sugar biosynthesis; UDP-N-acetyl-alpha-D-glucosamine biosynthesis; UDP-N-acetyl-alpha-D-glucosamine from N-acetyl-alpha-D-glucosamine 1-phosphate: step 1/1. Its pathway is bacterial outer membrane biogenesis; LPS lipid A biosynthesis. Its function is as follows. Catalyzes the last two sequential reactions in the de novo biosynthetic pathway for UDP-N-acetylglucosamine (UDP-GlcNAc). The C-terminal domain catalyzes the transfer of acetyl group from acetyl coenzyme A to glucosamine-1-phosphate (GlcN-1-P) to produce N-acetylglucosamine-1-phosphate (GlcNAc-1-P), which is converted into UDP-GlcNAc by the transfer of uridine 5-monophosphate (from uridine 5-triphosphate), a reaction catalyzed by the N-terminal domain. The chain is Bifunctional protein GlmU from Shewanella oneidensis (strain ATCC 700550 / JCM 31522 / CIP 106686 / LMG 19005 / NCIMB 14063 / MR-1).